Reading from the N-terminus, the 189-residue chain is Apolipoprotein D (189 aa).

The N-terminal stretch at 1–20 (MVMLLLLLSALAGLFGAAEG) is a signal peptide. Pyrrolidone carboxylic acid is present on Gln-21. Cystine bridges form between Cys-28/Cys-134 and Cys-61/Cys-185. Residues Asn-65 and Asn-98 are each glycosylated (N-linked (GlcNAc...) asparagine).

This sequence belongs to the calycin superfamily. Lipocalin family. Homodimer.

Its subcellular location is the secreted. In terms of biological role, APOD occurs in the macromolecular complex with lecithin-cholesterol acyltransferase. It is probably involved in the transport and binding of bilin. Appears to be able to transport a variety of ligands in a number of different contexts. This Macaca fascicularis (Crab-eating macaque) protein is Apolipoprotein D (APOD).